A 248-amino-acid polypeptide reads, in one-letter code: tRNA (guanine-N(1)-)-methyltransferase (248 aa).

S-adenosyl-L-methionine is bound by residues Gly-116 and 135 to 140; that span reads IGDFVL.

It belongs to the RNA methyltransferase TrmD family. In terms of assembly, homodimer.

The protein localises to the cytoplasm. The catalysed reaction is guanosine(37) in tRNA + S-adenosyl-L-methionine = N(1)-methylguanosine(37) in tRNA + S-adenosyl-L-homocysteine + H(+). In terms of biological role, specifically methylates guanosine-37 in various tRNAs. The polypeptide is tRNA (guanine-N(1)-)-methyltransferase (Anaeromyxobacter sp. (strain Fw109-5)).